The sequence spans 339 residues: Transcription initiation factor IIB (339 aa).

The TFIIB-type zinc finger occupies 39 to 70 (EELICPVCGSKNIIKDYERAEIVCEMCGCVLQ). 4 residues coordinate Zn(2+): C43, C46, C62, and C65. A run of 2 repeats spans residues 156–239 (SELD…SREL) and 250–331 (DYVP…ELTE).

It belongs to the TFIIB family.

Functionally, stabilizes TBP binding to an archaeal box-A promoter. Also responsible for recruiting RNA polymerase II to the pre-initiation complex (DNA-TBP-TFIIB). The chain is Transcription initiation factor IIB from Methanococcus maripaludis (strain C6 / ATCC BAA-1332).